The primary structure comprises 318 residues: Small ribosomal subunit biogenesis GTPase RsgA (318 aa).

Positions 82–246 constitute a CP-type G domain; sequence RQDEIRTKSF…LIDSPGFQEF (165 aa). GTP is bound by residues 132-135 and 186-194; these read NKSD and GPSGAGKST. Zn(2+) is bound by residues C270, C275, H277, and C283.

The protein belongs to the TRAFAC class YlqF/YawG GTPase family. RsgA subfamily. In terms of assembly, monomer. Associates with 30S ribosomal subunit, binds 16S rRNA. Zn(2+) serves as cofactor.

The protein resides in the cytoplasm. Its function is as follows. One of several proteins that assist in the late maturation steps of the functional core of the 30S ribosomal subunit. Helps release RbfA from mature subunits. May play a role in the assembly of ribosomal proteins into the subunit. Circularly permuted GTPase that catalyzes slow GTP hydrolysis, GTPase activity is stimulated by the 30S ribosomal subunit. The sequence is that of Small ribosomal subunit biogenesis GTPase RsgA from Variovorax paradoxus (strain S110).